A 77-amino-acid polypeptide reads, in one-letter code: MSLFDFFKTKGSAATATDRLKLILAKERTLNLPYMEEMRKEIIAVIQKYTKSSDIHFKTLDSNQSVETIEVEIILPK.

It belongs to the MinE family.

Functionally, prevents the cell division inhibition by proteins MinC and MinD at internal division sites while permitting inhibition at polar sites. This ensures cell division at the proper site by restricting the formation of a division septum at the midpoint of the long axis of the cell. In Helicobacter acinonychis (strain Sheeba), this protein is Cell division topological specificity factor.